The sequence spans 420 residues: Riboflavin biosynthesis protein RibBA (420 aa).

Positions 1 to 202 are DHBP synthase; sequence MTTFGTIEQA…IADLVAYRRR (202 aa). Residues 28–29, Asp-33, 141–145, and Glu-165 each bind D-ribulose 5-phosphate; these read RE and RPGHT. Residue Glu-29 coordinates Mg(2+). His-144 provides a ligand contact to Mg(2+). The tract at residues 203–420 is GTP cyclohydrolase II; sequence TEKQVELVAE…RAVVGDGIGA (218 aa). 253-257 is a binding site for GTP; that stretch reads RVHSE. Zn(2+) contacts are provided by Cys-258, Cys-269, and Cys-271. Residues Gln-274, 297–299, and Thr-319 contribute to the GTP site; that span reads EGR. The active-site Proton acceptor; for GTP cyclohydrolase activity is the Asp-331. Arg-333 serves as the catalytic Nucleophile; for GTP cyclohydrolase activity. GTP is bound by residues Thr-354 and Lys-359.

The protein in the N-terminal section; belongs to the DHBP synthase family. This sequence in the C-terminal section; belongs to the GTP cyclohydrolase II family. Mg(2+) serves as cofactor. It depends on Mn(2+) as a cofactor. The cofactor is Zn(2+).

The catalysed reaction is D-ribulose 5-phosphate = (2S)-2-hydroxy-3-oxobutyl phosphate + formate + H(+). It carries out the reaction GTP + 4 H2O = 2,5-diamino-6-hydroxy-4-(5-phosphoribosylamino)-pyrimidine + formate + 2 phosphate + 3 H(+). It participates in cofactor biosynthesis; riboflavin biosynthesis; 2-hydroxy-3-oxobutyl phosphate from D-ribulose 5-phosphate: step 1/1. It functions in the pathway cofactor biosynthesis; riboflavin biosynthesis; 5-amino-6-(D-ribitylamino)uracil from GTP: step 1/4. Catalyzes the conversion of D-ribulose 5-phosphate to formate and 3,4-dihydroxy-2-butanone 4-phosphate. Its function is as follows. Catalyzes the conversion of GTP to 2,5-diamino-6-ribosylamino-4(3H)-pyrimidinone 5'-phosphate (DARP), formate and pyrophosphate. In Salinispora arenicola (strain CNS-205), this protein is Riboflavin biosynthesis protein RibBA.